Consider the following 136-residue polypeptide: uncharacterized protein (136 aa).

The first 19 residues, 1-19, serve as a signal peptide directing secretion; it reads MMTAAKRLGLYSALRACSA. A helical membrane pass occupies residues 75–97; that stretch reads FWFSHTCLVFGSNTILFASLNSF.

The protein localises to the membrane. This is an uncharacterized protein from Saccharomyces cerevisiae (strain ATCC 204508 / S288c) (Baker's yeast).